We begin with the raw amino-acid sequence, 626 residues long: DNA mismatch repair protein MutL (626 aa).

Positions 352 to 399 are disordered; that stretch reads QPPSPSFTSRPSSAGYASGSWHPAVSSPRTEWSPQTAHPAHRPLDLGA. The segment covering 378 to 387 has biased composition (polar residues); it reads SPRTEWSPQT.

This sequence belongs to the DNA mismatch repair MutL/HexB family.

In terms of biological role, this protein is involved in the repair of mismatches in DNA. It is required for dam-dependent methyl-directed DNA mismatch repair. May act as a 'molecular matchmaker', a protein that promotes the formation of a stable complex between two or more DNA-binding proteins in an ATP-dependent manner without itself being part of a final effector complex. This Brucella anthropi (strain ATCC 49188 / DSM 6882 / CCUG 24695 / JCM 21032 / LMG 3331 / NBRC 15819 / NCTC 12168 / Alc 37) (Ochrobactrum anthropi) protein is DNA mismatch repair protein MutL.